We begin with the raw amino-acid sequence, 80 residues long: Protein FAM229B (80 aa).

The segment at 1–45 is disordered; the sequence is MPFRFGTQPRRFPVEGGDSSIELESGLSSSASCNGKETSPNRQLR. Residues 15-32 show a composition bias toward low complexity; the sequence is EGGDSSIELESGLSSSAS. Positions 33-42 are enriched in polar residues; the sequence is CNGKETSPNR.

The protein belongs to the FAM229 family.

The sequence is that of Protein FAM229B (Fam229b) from Rattus norvegicus (Rat).